The following is a 103-amino-acid chain: Large ribosomal subunit protein uL24 (103 aa).

This sequence belongs to the universal ribosomal protein uL24 family. In terms of assembly, part of the 50S ribosomal subunit.

Its function is as follows. One of two assembly initiator proteins, it binds directly to the 5'-end of the 23S rRNA, where it nucleates assembly of the 50S subunit. In terms of biological role, one of the proteins that surrounds the polypeptide exit tunnel on the outside of the subunit. The protein is Large ribosomal subunit protein uL24 of Bacillus anthracis (strain A0248).